The chain runs to 289 residues: ATP synthase subunit a (289 aa).

The next 6 helical transmembrane spans lie at 43-63 (AFHL…LFIF), 103-123 (VIAP…AVDL), 160-180 (FCVF…GGFI), 193-213 (IFVQ…TLIA), 232-252 (VFIL…GLGV), and 259-279 (AVFH…LTIV).

The protein belongs to the ATPase A chain family. As to quaternary structure, F-type ATPases have 2 components, CF(1) - the catalytic core - and CF(0) - the membrane proton channel. CF(1) has five subunits: alpha(3), beta(3), gamma(1), delta(1), epsilon(1). CF(0) has three main subunits: a(1), b(2) and c(9-12). The alpha and beta chains form an alternating ring which encloses part of the gamma chain. CF(1) is attached to CF(0) by a central stalk formed by the gamma and epsilon chains, while a peripheral stalk is formed by the delta and b chains.

It localises to the cell inner membrane. Its function is as follows. Key component of the proton channel; it plays a direct role in the translocation of protons across the membrane. The sequence is that of ATP synthase subunit a from Pseudomonas putida (strain GB-1).